A 310-amino-acid polypeptide reads, in one-letter code: Isoaspartyl peptidase/L-asparaginase (310 aa).

T167 serves as the catalytic Nucleophile. Substrate is bound by residues 195–198 and 218–221; these read RVGD and TGHG.

The protein belongs to the Ntn-hydrolase family. As to quaternary structure, heterodimer of an alpha and beta chain produced by autocleavage. Post-translationally, cleaved into an alpha and beta chain by autocatalysis; this activates the enzyme. The N-terminal residue of the beta subunit is responsible for the nucleophile hydrolase activity.

Its subcellular location is the cytoplasm. It carries out the reaction L-asparagine + H2O = L-aspartate + NH4(+). It catalyses the reaction Cleavage of a beta-linked Asp residue from the N-terminus of a polypeptide.. Functionally, has both L-asparaginase and beta-aspartyl peptidase activity. Does not have aspartylglucosaminidase activity and is inactive toward GlcNAc-L-Asn. Likewise, has no activity toward glutamine. In Danio rerio (Zebrafish), this protein is Isoaspartyl peptidase/L-asparaginase (asrgl1).